A 509-amino-acid polypeptide reads, in one-letter code: Methylmalonyl-CoA decarboxylase subunit alpha (509 aa).

The CoA carboxyltransferase N-terminal domain maps to 4–260 (VQEKIELLHE…NNMEDAPLVD (257 aa)). Residues 267-503 (REDESLNSLL…SKRENRAPKK (237 aa)) enclose the CoA carboxyltransferase C-terminal domain.

This sequence belongs to the AccD/PCCB family. As to quaternary structure, the methylmalonyl-CoA decarboxylase is composed of five subunits: the carboxyltransferase alpha subunit (MmdA), the tunnel beta subunit (MmdB), the biotin-containing gamma subunit (MmdC), and the delta (MmdD) and epsilon (MmdE) subunits. Interacts with the gamma subunit.

Its subcellular location is the cell membrane. It carries out the reaction (S)-methylmalonyl-CoA + Na(+)(in) + H(+)(out) = propanoyl-CoA + Na(+)(out) + CO2. With respect to regulation, completely inhibited by avidin. Its function is as follows. Carboxyltransferase subunit of the sodium ion pump methylmalonyl-CoA decarboxylase, which converts the chemical energy of a decarboxylation reaction into an electrochemical gradient of Na(+) ions across the cytoplasmic membrane, thereby creating a sodium ion motive force that is used for ATP synthesis. The alpha subunit catalyzes the Na(+)-independent carboxyltransfer from methylmalonyl-CoA to the prosthetic biotin group located on the gamma subunit. Can also convert malonyl-CoA into acetyl-CoA. In Veillonella parvula (Staphylococcus parvulus), this protein is Methylmalonyl-CoA decarboxylase subunit alpha.